Reading from the N-terminus, the 321-residue chain is tRNA U34 carboxymethyltransferase (321 aa).

Carboxy-S-adenosyl-L-methionine contacts are provided by residues lysine 90, tryptophan 104, lysine 109, glycine 129, 151–153 (DPT), 180–181 (IE), methionine 195, tyrosine 199, and arginine 314.

The protein belongs to the class I-like SAM-binding methyltransferase superfamily. CmoB family. Homotetramer.

The enzyme catalyses carboxy-S-adenosyl-L-methionine + 5-hydroxyuridine(34) in tRNA = 5-carboxymethoxyuridine(34) in tRNA + S-adenosyl-L-homocysteine + H(+). In terms of biological role, catalyzes carboxymethyl transfer from carboxy-S-adenosyl-L-methionine (Cx-SAM) to 5-hydroxyuridine (ho5U) to form 5-carboxymethoxyuridine (cmo5U) at position 34 in tRNAs. In Histophilus somni (strain 129Pt) (Haemophilus somnus), this protein is tRNA U34 carboxymethyltransferase.